A 140-amino-acid polypeptide reads, in one-letter code: 5-NmdU N-acetyltransferase (140 aa).

Residues 2–140 (IVVRKALPEE…GEGLALFKEW (139 aa)) enclose the N-acetyltransferase domain.

Belongs to the acetyltransferase family.

The enzyme catalyses 5-aminomethyl-dUMP in DNA + acetyl-CoA = 5-acetylaminomethyl-dUMP in DNA + CoA + H(+). Its function is as follows. Acetylates 5-aminomethyl-2'-deoxyuridine (5-NmdU) to produce 5-acetylaminomethyl-2'-deoxyuridine (5-AcNmdU) on DNA as a step in the pathway leading to thymidine hypermodifications in the viral genome. As a final result of the pathway of hypermodification, 5-acetylaminomethyl-2'-deoxyuridine (5-AcNmdU) substitutes for a subset of thymidines in the viral DNA. These modifications probably prevent degradation of viral genome by the host restriction-modification antiviral defense system. The sequence is that of 5-NmdU N-acetyltransferase from Pseudomonas aeruginosa.